The chain runs to 178 residues: Large ribosomal subunit protein uL6 (178 aa).

It belongs to the universal ribosomal protein uL6 family. Part of the 50S ribosomal subunit.

In terms of biological role, this protein binds to the 23S rRNA, and is important in its secondary structure. It is located near the subunit interface in the base of the L7/L12 stalk, and near the tRNA binding site of the peptidyltransferase center. In Campylobacter fetus subsp. fetus (strain 82-40), this protein is Large ribosomal subunit protein uL6.